The chain runs to 258 residues: Probable N-acetylglucosaminyl-phosphatidylinositol de-N-acetylase (258 aa).

The segment at 147–170 (KSSSTTTTSTTSSSSSSSSLSNRT) is disordered. Low complexity predominate over residues 148-170 (SSSTTTTSTTSSSSSSSSLSNRT).

It belongs to the PIGL family.

The protein localises to the endoplasmic reticulum membrane. The enzyme catalyses a 6-(N-acetyl-alpha-D-glucosaminyl)-1-(1,2-diacyl-sn-glycero-3-phospho)-1D-myo-inositol + H2O = a 6-(alpha-D-glucosaminyl)-1-(1,2-diacyl-sn-glycero-3-phospho)-1D-myo-inositol + acetate. It participates in glycolipid biosynthesis; glycosylphosphatidylinositol-anchor biosynthesis. Its function is as follows. Involved in the second step of GPI biosynthesis. De-N-acetylation of N-acetylglucosaminyl-phosphatidylinositol. The protein is Probable N-acetylglucosaminyl-phosphatidylinositol de-N-acetylase (pigl) of Dictyostelium discoideum (Social amoeba).